The following is a 555-amino-acid chain: MKSDIEIARETDLRKIKEVATTLGIPREEVQNYGRYIAKVPIHLIDKKQMDQHNLILVTAITPTKAGIGKTTVSIGLALGLNKIGKKAVVALREPSLGPCFGMKGGAAGGGYAQVLPMENINLHFTGDFHAVTSAHNMITALLDNYIYQTRNTCEGLKEIKWKRVLDVNDRSLRNIVSGLGGSANGVPTETGFDITPASEIMAILCLATDIEDLKRRVGNILLGYTNEDKPFTVNDLGIAGAITVLLKDALLPNLVQTTENTPAFVHGGPFANIAHGCNSISATQMALTYGDYVITEAGFGADLGAEKFFNIKCRKAGLSPKLTVIVATAQSLKLHGGVPEKEIKEPNIEGLKNGFANLDKHIENMKSFGQQVIVTFNRFATDTDEEIALVAEHCEEKGVGFAMNNVFAEGGEGGTELARLVVDTIENHPSAPLQYTYDLNDPIRTKVQKVAQKIYGASSIVYTTLADKKLRQIESLGISHYPICIAKTQYSFSSDPKAYGVAKDFELKVRDVIINNGAEMIVVVMGEIMRMPGLPKEPQARKIDIVDGMIEGLS.

Position 64–71 (64–71 (TKAGIGKT)) interacts with ATP.

The protein belongs to the formate--tetrahydrofolate ligase family.

It carries out the reaction (6S)-5,6,7,8-tetrahydrofolate + formate + ATP = (6R)-10-formyltetrahydrofolate + ADP + phosphate. Its pathway is one-carbon metabolism; tetrahydrofolate interconversion. This is Formate--tetrahydrofolate ligase from Parabacteroides distasonis (strain ATCC 8503 / DSM 20701 / CIP 104284 / JCM 5825 / NCTC 11152).